The sequence spans 495 residues: MHEKSLTELRAALTARECSAVELAQLYLKRIEAANSLNAFIQVDPDLTLAQAKAADALLHTGHAGPLVGLPIAHKDVFVTKGWRSTAGSKMLSNYESPFDATVVARLQNAGMVCVGKTNMDEFAMGSSNENSYFGPVQNPWDVKAVPGGSSGGSAAAVAARLAPAATGTDTGGSIRQPASFSGITGIKPTYGRVSRYGMIAFASSLDQGGPMARSAADCATLLNAMAGFDGRDSTSLVRDDEDYTRYLGQPWKEDGAGKPLAGLRIGLPKEYFGAGLADDVRASIDAALKQYEALGATLVEVSLPKTELSIPVYYVIAPAEASSNLSRFDGVRFGHRAAEYRDLLDMYKKSRAEGFGPEVKRRILVGAYVLSHGYYDAYYLQAQKIRRIIAQDFQEAFRQCDVIMGPVAPTVAWDLGAKGDDPVQMYLADIYTLSVSLAGLPGMSVPCGFGAGANAQRPVGLQIIGNYFNEARMLQVADAFQRATDWHRKAPAGV.

Catalysis depends on charge relay system residues Lys75 and Ser150. Ser174 acts as the Acyl-ester intermediate in catalysis.

This sequence belongs to the amidase family. GatA subfamily. In terms of assembly, heterotrimer of A, B and C subunits.

The enzyme catalyses L-glutamyl-tRNA(Gln) + L-glutamine + ATP + H2O = L-glutaminyl-tRNA(Gln) + L-glutamate + ADP + phosphate + H(+). In terms of biological role, allows the formation of correctly charged Gln-tRNA(Gln) through the transamidation of misacylated Glu-tRNA(Gln) in organisms which lack glutaminyl-tRNA synthetase. The reaction takes place in the presence of glutamine and ATP through an activated gamma-phospho-Glu-tRNA(Gln). This is Glutamyl-tRNA(Gln) amidotransferase subunit A from Paraburkholderia xenovorans (strain LB400).